Consider the following 136-residue polypeptide: Peptide methionine sulfoxide reductase MsrB (136 aa).

A MsrB domain is found at Glu-13–Lys-135. The Zn(2+) site is built by Cys-52, Cys-55, Cys-101, and Cys-104. Cys-124 acts as the Nucleophile in catalysis.

It belongs to the MsrB Met sulfoxide reductase family. It depends on Zn(2+) as a cofactor.

It catalyses the reaction L-methionyl-[protein] + [thioredoxin]-disulfide + H2O = L-methionyl-(R)-S-oxide-[protein] + [thioredoxin]-dithiol. The sequence is that of Peptide methionine sulfoxide reductase MsrB from Synechococcus sp. (strain RCC307).